Consider the following 368-residue polypeptide: Putative alcohol dehydrogenase D (368 aa).

Zn(2+) is bound by residues C40, H61, C91, C94, C97, C105, and C167.

Belongs to the zinc-containing alcohol dehydrogenase family. It depends on Zn(2+) as a cofactor.

It carries out the reaction a primary alcohol + NAD(+) = an aldehyde + NADH + H(+). It catalyses the reaction a secondary alcohol + NAD(+) = a ketone + NADH + H(+). Required for maintaining the appropriate mycolic acid composition and permeability of the envelope on its exposure to acidic pH. The sequence is that of Putative alcohol dehydrogenase D (adhD) from Mycobacterium tuberculosis (strain CDC 1551 / Oshkosh).